The following is a 922-amino-acid chain: Eukaryotic translation initiation factor 3 subunit C (922 aa).

Disordered regions lie at residues 1-37 (MSRF…QPII) and 154-308 (APIA…KVKG). Over residues 8-21 (GSDSESESSLSGDE) the composition is skewed to low complexity. Acidic residues predominate over residues 165-189 (ESADEDQEKDEDSEASSSSDDDSDE). Over residues 207 to 216 (SRSKFLKKEE) the composition is skewed to basic and acidic residues. A compositionally biased stretch (acidic residues) spans 217–243 (AEDEESSSDDEDWGSDSDESDSDESDD). Residues 258-275 (TVNEGDRQAAEKKKEEKA) show a composition bias toward basic and acidic residues. Over residues 289 to 301 (EGEEEEDDNEGGG) the composition is skewed to acidic residues. One can recognise a PCI domain in the interval 674-850 (FHMHINLELL…QTVVMHGTEP (177 aa)). The tract at residues 885–922 (YFNRGDRGDRDQKDQYQRKEGGYMRRGYRRDQQGQSNY) is disordered. Residues 888 to 907 (RGDRGDRDQKDQYQRKEGGY) are compositionally biased toward basic and acidic residues.

Belongs to the eIF-3 subunit C family. As to quaternary structure, component of the eukaryotic translation initiation factor 3 (eIF-3) complex, which is composed of 13 subunits: eif3a, eif3b, eif3c, eif3d, eif3e, eif3f, eif3g, eif3h, eif3i, eif3j, eif3k, eif3l and eif3m.

Its subcellular location is the cytoplasm. Functionally, component of the eukaryotic translation initiation factor 3 (eIF-3) complex, which is involved in protein synthesis of a specialized repertoire of mRNAs and, together with other initiation factors, stimulates binding of mRNA and methionyl-tRNAi to the 40S ribosome. The eIF-3 complex specifically targets and initiates translation of a subset of mRNAs involved in cell proliferation. This chain is Eukaryotic translation initiation factor 3 subunit C (eif3c), found in Xenopus tropicalis (Western clawed frog).